We begin with the raw amino-acid sequence, 904 residues long: Leucine--tRNA ligase (904 aa).

The short motif at 49 to 59 is the 'HIGH' region element; sequence PYPSGDLHIGH. Residues 663–667 carry the 'KMSKS' region motif; sequence TMSKS. Lysine 666 provides a ligand contact to ATP.

This sequence belongs to the class-I aminoacyl-tRNA synthetase family.

The protein resides in the cytoplasm. The enzyme catalyses tRNA(Leu) + L-leucine + ATP = L-leucyl-tRNA(Leu) + AMP + diphosphate. This is Leucine--tRNA ligase from Roseiflexus castenholzii (strain DSM 13941 / HLO8).